A 206-amino-acid chain; its full sequence is LexA repressor (206 aa).

A DNA-binding region (H-T-H motif) is located at residues Val29 to Ala49. Active-site for autocatalytic cleavage activity residues include Ser130 and Lys167.

Belongs to the peptidase S24 family. As to quaternary structure, homodimer.

It carries out the reaction Hydrolysis of Ala-|-Gly bond in repressor LexA.. Represses a number of genes involved in the response to DNA damage (SOS response), including recA and lexA. In the presence of single-stranded DNA, RecA interacts with LexA causing an autocatalytic cleavage which disrupts the DNA-binding part of LexA, leading to derepression of the SOS regulon and eventually DNA repair. This chain is LexA repressor, found in Alkaliphilus oremlandii (strain OhILAs) (Clostridium oremlandii (strain OhILAs)).